The sequence spans 136 residues: Large ribosomal subunit protein uL16 (136 aa).

The protein belongs to the universal ribosomal protein uL16 family. As to quaternary structure, part of the 50S ribosomal subunit.

In terms of biological role, binds 23S rRNA and is also seen to make contacts with the A and possibly P site tRNAs. The polypeptide is Large ribosomal subunit protein uL16 (Ruthia magnifica subsp. Calyptogena magnifica).